A 95-amino-acid polypeptide reads, in one-letter code: Putative pterin-4-alpha-carbinolamine dehydratase (95 aa).

It belongs to the pterin-4-alpha-carbinolamine dehydratase family.

It catalyses the reaction (4aS,6R)-4a-hydroxy-L-erythro-5,6,7,8-tetrahydrobiopterin = (6R)-L-erythro-6,7-dihydrobiopterin + H2O. In Solibacter usitatus (strain Ellin6076), this protein is Putative pterin-4-alpha-carbinolamine dehydratase.